The following is a 171-amino-acid chain: Protein GrpE (171 aa).

The segment at 1–22 (MNHEQPDIESQQSAADAAATAG) is disordered.

Belongs to the GrpE family. Homodimer.

The protein localises to the cytoplasm. Functionally, participates actively in the response to hyperosmotic and heat shock by preventing the aggregation of stress-denatured proteins, in association with DnaK and GrpE. It is the nucleotide exchange factor for DnaK and may function as a thermosensor. Unfolded proteins bind initially to DnaJ; upon interaction with the DnaJ-bound protein, DnaK hydrolyzes its bound ATP, resulting in the formation of a stable complex. GrpE releases ADP from DnaK; ATP binding to DnaK triggers the release of the substrate protein, thus completing the reaction cycle. Several rounds of ATP-dependent interactions between DnaJ, DnaK and GrpE are required for fully efficient folding. This Stenotrophomonas maltophilia (strain K279a) protein is Protein GrpE.